The following is a 372-amino-acid chain: Glutamate 5-kinase (372 aa).

An ATP-binding site is contributed by K14. Substrate contacts are provided by S54, D141, and N153. Position 173–174 (173–174) interacts with ATP; the sequence is TD. Residues 280–358 form the PUA domain; that stretch reads RGHVVIDDGA…GEIESVLGYM (79 aa).

Belongs to the glutamate 5-kinase family.

It localises to the cytoplasm. The catalysed reaction is L-glutamate + ATP = L-glutamyl 5-phosphate + ADP. Its pathway is amino-acid biosynthesis; L-proline biosynthesis; L-glutamate 5-semialdehyde from L-glutamate: step 1/2. In terms of biological role, catalyzes the transfer of a phosphate group to glutamate to form L-glutamate 5-phosphate. The protein is Glutamate 5-kinase of Paraburkholderia xenovorans (strain LB400).